Consider the following 841-residue polypeptide: Serine/threonine-protein kinase/endoribonuclease IRE1a (841 aa).

Positions methionine 1–alanine 30 are cleaved as a signal peptide. Residues aspartate 31–glutamine 323 are Lumenal-facing. N-linked (GlcNAc...) asparagine glycosylation is found at asparagine 100, asparagine 104, asparagine 119, asparagine 132, and asparagine 221. The chain crosses the membrane as a helical span at residues tryptophan 324–isoleucine 344. At lysine 345–isoleucine 841 the chain is on the cytoplasmic side. Positions serine 352 to glutamine 382 are disordered. In terms of domain architecture, Protein kinase spans phenylalanine 414 to phenylalanine 704. Residues isoleucine 420–valine 428 and lysine 442 contribute to the ATP site. Catalysis depends on aspartate 570, which acts as the Proton acceptor. The KEN domain maps to serine 707–cysteine 838.

It belongs to the protein kinase superfamily. Ser/Thr protein kinase family. In terms of assembly, homodimer; disulfide-linked. Dimer formation is driven by hydrophobic interactions within the N-terminal luminal domains and stabilized by disulfide bridges. It depends on Mg(2+) as a cofactor. Post-translationally, autophosphorylated. As to expression, ubiquitous. Detected in the vascular bundles of young plants, leaves, roots, seedlings and in the receptacles of flowers and vascular bundles of the petals.

The protein resides in the endoplasmic reticulum membrane. It carries out the reaction L-seryl-[protein] + ATP = O-phospho-L-seryl-[protein] + ADP + H(+). The enzyme catalyses L-threonyl-[protein] + ATP = O-phospho-L-threonyl-[protein] + ADP + H(+). Its activity is regulated as follows. The kinase domain is activated by trans-autophosphorylation. Kinase activity is required for activation of the endoribonuclease domain. Senses unfolded proteins in the lumen of the endoplasmic reticulum via its N-terminal domain which leads to enzyme auto-activation. The active endoribonuclease domain splices bZIP60 mRNA to generate a new C-terminus, converting it into a potent unfolded-protein response transcriptional activator which then induces transcription of UPR target genes. Involved in organ growth regulation. Plays a role in plant immunity and abiotic stress responses. In Arabidopsis thaliana (Mouse-ear cress), this protein is Serine/threonine-protein kinase/endoribonuclease IRE1a (IRE1A).